The primary structure comprises 446 residues: ATP-dependent protease ATPase subunit HslU (446 aa).

Residues Val18, Gly60–Glu65, Asp259, Glu324, and Arg396 each bind ATP.

The protein belongs to the ClpX chaperone family. HslU subfamily. A double ring-shaped homohexamer of HslV is capped on each side by a ring-shaped HslU homohexamer. The assembly of the HslU/HslV complex is dependent on binding of ATP.

The protein localises to the cytoplasm. In terms of biological role, ATPase subunit of a proteasome-like degradation complex; this subunit has chaperone activity. The binding of ATP and its subsequent hydrolysis by HslU are essential for unfolding of protein substrates subsequently hydrolyzed by HslV. HslU recognizes the N-terminal part of its protein substrates and unfolds these before they are guided to HslV for hydrolysis. This chain is ATP-dependent protease ATPase subunit HslU, found in Acidovorax ebreus (strain TPSY) (Diaphorobacter sp. (strain TPSY)).